A 114-amino-acid chain; its full sequence is Large ribosomal subunit protein uL18 (114 aa).

Belongs to the universal ribosomal protein uL18 family. In terms of assembly, part of the 50S ribosomal subunit; part of the 5S rRNA/L5/L18/L25 subcomplex. Contacts the 5S and 23S rRNAs.

Functionally, this is one of the proteins that bind and probably mediate the attachment of the 5S RNA into the large ribosomal subunit, where it forms part of the central protuberance. This is Large ribosomal subunit protein uL18 from Porphyromonas gingivalis (strain ATCC 33277 / DSM 20709 / CIP 103683 / JCM 12257 / NCTC 11834 / 2561).